Reading from the N-terminus, the 183-residue chain is Glutathione-regulated potassium-efflux system ancillary protein KefG (183 aa).

The protein belongs to the NAD(P)H dehydrogenase (quinone) family. KefG subfamily. As to quaternary structure, interacts with KefB.

The protein resides in the cell inner membrane. It catalyses the reaction a quinone + NADH + H(+) = a quinol + NAD(+). It carries out the reaction a quinone + NADPH + H(+) = a quinol + NADP(+). Regulatory subunit of a potassium efflux system that confers protection against electrophiles. Required for full activity of KefB. The polypeptide is Glutathione-regulated potassium-efflux system ancillary protein KefG (Escherichia coli O6:K15:H31 (strain 536 / UPEC)).